The following is a 461-amino-acid chain: Tubulin gamma-2 chain (461 aa).

142 to 148 (AGGTGSG) contributes to the GTP binding site.

The protein belongs to the tubulin family.

It is found in the cytoplasm. It localises to the cytoskeleton. The protein resides in the microtubule organizing center. Its subcellular location is the centrosome. In terms of biological role, tubulin is the major constituent of microtubules. The gamma chain is found at microtubule organizing centers (MTOC) such as the spindle poles or the centrosome, suggesting that it is involved in the minus-end nucleation of microtubule assembly. This is Tubulin gamma-2 chain from Euplotoides octocarinatus (Freshwater ciliate).